A 466-amino-acid chain; its full sequence is Soluble pyridine nucleotide transhydrogenase (466 aa).

Residue 36-45 coordinates FAD; the sequence is ERYQNVGGGC.

The protein belongs to the class-I pyridine nucleotide-disulfide oxidoreductase family. FAD serves as cofactor.

Its subcellular location is the cytoplasm. The enzyme catalyses NAD(+) + NADPH = NADH + NADP(+). Functionally, conversion of NADPH, generated by peripheral catabolic pathways, to NADH, which can enter the respiratory chain for energy generation. The chain is Soluble pyridine nucleotide transhydrogenase from Escherichia coli O127:H6 (strain E2348/69 / EPEC).